A 366-amino-acid polypeptide reads, in one-letter code: Cobalt-precorrin-5B C(1)-methyltransferase (366 aa).

Belongs to the CbiD family.

The enzyme catalyses Co-precorrin-5B + S-adenosyl-L-methionine = Co-precorrin-6A + S-adenosyl-L-homocysteine. Its pathway is cofactor biosynthesis; adenosylcobalamin biosynthesis; cob(II)yrinate a,c-diamide from sirohydrochlorin (anaerobic route): step 6/10. Its function is as follows. Catalyzes the methylation of C-1 in cobalt-precorrin-5B to form cobalt-precorrin-6A. This Thermus thermophilus (strain ATCC BAA-163 / DSM 7039 / HB27) protein is Cobalt-precorrin-5B C(1)-methyltransferase.